We begin with the raw amino-acid sequence, 114 residues long: MICOS complex subunit MIC12 (114 aa).

The helical transmembrane segment at 4–26 (IAKLGSFTLVSGVVATSCYYYFI) threads the bilayer.

It belongs to the MICOS complex subunit Mic12 family. In terms of assembly, component of the mitochondrial contact site and cristae organizing system (MICOS) complex.

It is found in the mitochondrion inner membrane. Functionally, component of the MICOS complex, a large protein complex of the mitochondrial inner membrane that plays crucial roles in the maintenance of crista junctions, inner membrane architecture, and formation of contact sites to the outer membrane. The chain is MICOS complex subunit MIC12 (AIM5) from Candida glabrata (strain ATCC 2001 / BCRC 20586 / JCM 3761 / NBRC 0622 / NRRL Y-65 / CBS 138) (Yeast).